A 400-amino-acid polypeptide reads, in one-letter code: Egl nine homolog 1 (400 aa).

At alanine 2 the chain carries N-acetylalanine. A required for nuclear export region spans residues 6–20 (GGPGVLSASERDRQY). The residue at position 12 (serine 12) is a Phosphoserine. 8 residues coordinate Zn(2+): cysteine 21, cysteine 24, cysteine 33, cysteine 36, cysteine 42, histidine 46, histidine 54, and cysteine 58. Residues 21-58 (CELCGKMENLLRCGRCRSSFYCCKEHQRQDWKKHKLVC) form an MYND-type; atypical zinc finger. The span at 62–74 (EAPRAQPAPAQPR) shows a compositional bias: low complexity. Residues 62–161 (EAPRAQPAPA…PGGGLRPNGQ (100 aa)) form a disordered region. At serine 114 the chain carries Phosphoserine. Residues 142–157 (AGGGPGEALSPGGGLR) are compositionally biased toward gly residues. 2 positions are modified to S-nitrosocysteine: cysteine 178 and cysteine 185. Residues 218 to 228 (VSQKSDSSKDI) form a beta(2)beta(3) 'finger-like' loop region. The 99-residue stretch at 271–369 (GRTKAMVACY…RYAITVWYFD (99 aa)) folds into the Fe2OG dioxygenase domain. Cysteine 279 is modified (S-nitrosocysteine). Positions 290 and 292 each coordinate Fe cation. 2 positions are modified to S-nitrosocysteine: cysteine 300 and cysteine 303. Histidine 351 provides a ligand contact to Fe cation. Arginine 360 serves as a coordination point for 2-oxoglutarate.

As to quaternary structure, monomer. Interacts with ING4; the interaction inhibits the hydroxylation of HIF alpha proteins. Interacts with PTGES3 (via PXLE motif); thereby recruiting EGLN1 to the HSP90 pathway to facilitate HIF alpha proteins hydroxylation. Interacts with LIMD1. Found in a complex composed of LIMD1, VHL, EGLN1/PHD2, ELOB and CUL2. Interacts with EPAS1. Interacts with CBFA2T3 and HIF1A. Fe(2+) serves as cofactor. Requires L-ascorbate as cofactor. Post-translationally, S-nitrosylation inhibits the enzyme activity up to 60% under aerobic conditions. Chelation of Fe(2+) has no effect on the S-nitrosylation. It is uncertain whether nitrosylation occurs on Cys-300 or Cys-303. Expressed in heart, brain liver, skeletal muscle and kidney. Low levels were detected in the lung. Constitutively expressed during differentiation of C2C12 skeletal myocytes.

It localises to the cytoplasm. The protein resides in the nucleus. The catalysed reaction is L-prolyl-[hypoxia-inducible factor alpha subunit] + 2-oxoglutarate + O2 = trans-4-hydroxy-L-prolyl-[hypoxia-inducible factor alpha subunit] + succinate + CO2. Functionally, cellular oxygen sensor that catalyzes, under normoxic conditions, the post-translational formation of 4-hydroxyproline in hypoxia-inducible factor (HIF) alpha proteins. Hydroxylates a specific proline found in each of the oxygen-dependent degradation (ODD) domains (N-terminal, NODD, and C-terminal, CODD) of HIF1A. Also hydroxylates HIF2A. Has a preference for the CODD site for both HIF1A and HIF1B. Hydroxylated HIFs are then targeted for proteasomal degradation via the von Hippel-Lindau ubiquitination complex. Under hypoxic conditions, the hydroxylation reaction is attenuated allowing HIFs to escape degradation resulting in their translocation to the nucleus, heterodimerization with HIF1B, and increased expression of hypoxy-inducible genes. EGLN1 is the most important isozyme under normoxia and, through regulating the stability of HIF1, involved in various hypoxia-influenced processes such as angiogenesis in retinal and cardiac functionality. Target proteins are preferentially recognized via a LXXLAP motif. The chain is Egl nine homolog 1 (Egln1) from Mus musculus (Mouse).